The sequence spans 553 residues: Interleukin-20 receptor subunit alpha (553 aa).

Positions 1 to 29 (MRAPGRPALRPLPLPPLLLLLLAAPWGRA) are cleaved as a signal peptide. Over 30–250 (VPCVSGGLPK…KDQSSEFKAK (221 aa)) the chain is Extracellular. Fibronectin type-III domains follow at residues 37–135 (LPKP…FLET) and 136–242 (QIGP…TLKD). N-linked (GlcNAc...) asparagine glycosylation is found at asparagine 42, asparagine 83, asparagine 91, asparagine 182, asparagine 191, and asparagine 200. Cysteine 87 and cysteine 95 are disulfide-bonded. Cysteines 215 and 236 form a disulfide. A helical transmembrane segment spans residues 251–271 (IIFWYVLPVSITVFLFSVMGY). Topologically, residues 272–553 (SIYRYIHVGK…EWGLYVQMEN (282 aa)) are cytoplasmic. 2 disordered regions span residues 333–353 (SSDVSSLNDPQPSGNLRPPQE) and 462–515 (QEHT…LGEE). Positions 334–346 (SDVSSLNDPQPSG) are enriched in polar residues. Residues 499-513 (QDSEGCEPSEGDGLG) show a composition bias toward acidic residues.

Belongs to the type II cytokine receptor family. Heterodimer with IL20RB and heterodimer with IL10RB. Widely expressed with highest levels in skin and testis and high levels in brain. Highly expressed in psoriatic skin.

The protein localises to the membrane. The IL20RA/IL20RB dimer is a receptor for IL19, IL20 and IL24. The IL20RA/IL10RB dimer is a receptor for IL26. This chain is Interleukin-20 receptor subunit alpha (IL20RA), found in Homo sapiens (Human).